Consider the following 467-residue polypeptide: Ribulose bisphosphate carboxylase large chain (467 aa).

Positions 106 and 156 each coordinate substrate. Lys-158 (proton acceptor) is an active-site residue. Substrate is bound at residue Lys-160. Residues Lys-184, Asp-186, and Glu-187 each contribute to the Mg(2+) site. Lys-184 is subject to N6-carboxylysine. The active-site Proton acceptor is the His-276. Substrate is bound by residues Arg-277, His-309, and Ser-361.

It belongs to the RuBisCO large chain family. Type I subfamily. In terms of assembly, heterohexadecamer of 8 large chains and 8 small chains. Requires Mg(2+) as cofactor.

It is found in the plastid. Its subcellular location is the chloroplast. It catalyses the reaction 2 (2R)-3-phosphoglycerate + 2 H(+) = D-ribulose 1,5-bisphosphate + CO2 + H2O. The enzyme catalyses D-ribulose 1,5-bisphosphate + O2 = 2-phosphoglycolate + (2R)-3-phosphoglycerate + 2 H(+). Its function is as follows. RuBisCO catalyzes two reactions: the carboxylation of D-ribulose 1,5-bisphosphate, the primary event in carbon dioxide fixation, as well as the oxidative fragmentation of the pentose substrate in the photorespiration process. Both reactions occur simultaneously and in competition at the same active site. The chain is Ribulose bisphosphate carboxylase large chain (rbcL) from Chondrus crispus (Carrageen Irish moss).